A 532-amino-acid polypeptide reads, in one-letter code: Nectin-4 (532 aa).

Residues 1–30 (MGPLHGALLPPISVTVSLLILLLCAPGGRC) form the signal peptide. One can recognise an Ig-like V-type domain in the interval 31–142 (GVVHTEKSMT…GNFDAELELK (112 aa)). Topologically, residues 31–344 (GVVHTEKSMT…TKIDLVSVSL (314 aa)) are extracellular. 3 disulfide bridges follow: Cys-51/Cys-125, Cys-169/Cys-221, and Cys-266/Cys-312. Ig-like C2-type domains follow at residues 146 to 235 (PPLP…KRIT) and 244 to 328 (AEVS…AIVS). The tract at residues 152 to 179 (GPGPPLTEGEGKSLAASCTAEGNPAPTL) is disordered. Residues Asn-189 and Asn-282 are each glycosylated (N-linked (GlcNAc...) asparagine). A helical membrane pass occupies residues 345-365 (GSVGILTAVLLVVLVITLLLV). Residues 366 to 532 (NRHHKRQTKQ…IYINGRGHLV (167 aa)) lie on the Cytoplasmic side of the membrane. Positions 453-491 (QTELLSTVPDEEVKEDGEEPEQVEQSLEKEPNPTEPDGM) are disordered. Over residues 461–474 (PDEEVKEDGEEPEQ) the composition is skewed to acidic residues.

It belongs to the nectin family.

Its subcellular location is the cell membrane. May be involved in cell adhesion. This is Nectin-4 from Xenopus tropicalis (Western clawed frog).